An 89-amino-acid chain; its full sequence is Small ribosomal subunit protein uS15 (89 aa).

Belongs to the universal ribosomal protein uS15 family. In terms of assembly, part of the 30S ribosomal subunit. Forms a bridge to the 50S subunit in the 70S ribosome, contacting the 23S rRNA.

Its function is as follows. One of the primary rRNA binding proteins, it binds directly to 16S rRNA where it helps nucleate assembly of the platform of the 30S subunit by binding and bridging several RNA helices of the 16S rRNA. Functionally, forms an intersubunit bridge (bridge B4) with the 23S rRNA of the 50S subunit in the ribosome. The chain is Small ribosomal subunit protein uS15 from Shewanella loihica (strain ATCC BAA-1088 / PV-4).